We begin with the raw amino-acid sequence, 65 residues long: MGSIRQTYIKSTTDALLRQYPNEFGSDFTANKAKVEQLASVQTKEVRNRIAGYVTRKMASKGRKK.

The protein belongs to the eukaryotic ribosomal protein eS17 family.

In Methanocella arvoryzae (strain DSM 22066 / NBRC 105507 / MRE50), this protein is Small ribosomal subunit protein eS17.